We begin with the raw amino-acid sequence, 289 residues long: Serine/threonine-protein phosphatase Pgam5, mitochondrial (289 aa).

A helical membrane pass occupies residues 7–23 (FACGTGAGLAAYYLQRL).

The protein belongs to the phosphoglycerate mutase family. BPG-dependent PGAM subfamily. In terms of assembly, interacts with Pk92B/ASK1.

The protein localises to the mitochondrion outer membrane. It catalyses the reaction O-phospho-L-seryl-[protein] + H2O = L-seryl-[protein] + phosphate. The catalysed reaction is O-phospho-L-threonyl-[protein] + H2O = L-threonyl-[protein] + phosphate. In terms of biological role, displays phosphatase activity for serine/threonine residues, and dephosphorylates and activates Pk92B kinase. Has apparently no phosphoglycerate mutase activity. This Drosophila sechellia (Fruit fly) protein is Serine/threonine-protein phosphatase Pgam5, mitochondrial.